Here is a 201-residue protein sequence, read N- to C-terminus: ATP-dependent Clp protease proteolytic subunit (201 aa).

The active-site Nucleophile is the serine 98. Histidine 123 is a catalytic residue.

This sequence belongs to the peptidase S14 family. As to quaternary structure, fourteen ClpP subunits assemble into 2 heptameric rings which stack back to back to give a disk-like structure with a central cavity, resembling the structure of eukaryotic proteasomes.

The protein resides in the cytoplasm. The enzyme catalyses Hydrolysis of proteins to small peptides in the presence of ATP and magnesium. alpha-casein is the usual test substrate. In the absence of ATP, only oligopeptides shorter than five residues are hydrolyzed (such as succinyl-Leu-Tyr-|-NHMec, and Leu-Tyr-Leu-|-Tyr-Trp, in which cleavage of the -Tyr-|-Leu- and -Tyr-|-Trp bonds also occurs).. Functionally, cleaves peptides in various proteins in a process that requires ATP hydrolysis. Has a chymotrypsin-like activity. Plays a major role in the degradation of misfolded proteins. The sequence is that of ATP-dependent Clp protease proteolytic subunit from Desulfatibacillum aliphaticivorans.